The primary structure comprises 213 residues: MSNPSCIIIAITGASASGKSSISSTVHKELCNELGCQEIGIITEDSYYKDQSHLEMTERVKTNYDHPSSMDRDLLIQHLKNLKNGSAVDVPVYSYVEHTRTNETTHFTPKRIVILEGILLLTDERVRQLADISVFVDTPLDICFIRRLQRDMEERGRSLQSVIDQYRATVRPMFLQFIEPSKQYADIVIPRGGKNRIAINMLKAQILHLLNQK.

13–20 (GASASGKS) is an ATP binding site.

Belongs to the uridine kinase family.

The protein localises to the cytoplasm. The catalysed reaction is uridine + ATP = UMP + ADP + H(+). It carries out the reaction cytidine + ATP = CMP + ADP + H(+). Its pathway is pyrimidine metabolism; CTP biosynthesis via salvage pathway; CTP from cytidine: step 1/3. It participates in pyrimidine metabolism; UMP biosynthesis via salvage pathway; UMP from uridine: step 1/1. This is Uridine kinase from Haemophilus influenzae (strain PittEE).